A 211-amino-acid polypeptide reads, in one-letter code: Histidine biosynthesis bifunctional protein HisIE (211 aa).

The segment at 1–122 (MSVKAAEVSS…DPQEESQMVW (122 aa)) is phosphoribosyl-AMP cyclohydrolase. Positions 123–211 (LHQLEQLLAA…VINKLKERHK (89 aa)) are phosphoribosyl-ATP pyrophosphohydrolase.

It in the N-terminal section; belongs to the PRA-CH family. This sequence in the C-terminal section; belongs to the PRA-PH family.

Its subcellular location is the cytoplasm. The enzyme catalyses 1-(5-phospho-beta-D-ribosyl)-ATP + H2O = 1-(5-phospho-beta-D-ribosyl)-5'-AMP + diphosphate + H(+). The catalysed reaction is 1-(5-phospho-beta-D-ribosyl)-5'-AMP + H2O = 1-(5-phospho-beta-D-ribosyl)-5-[(5-phospho-beta-D-ribosylamino)methylideneamino]imidazole-4-carboxamide. Its pathway is amino-acid biosynthesis; L-histidine biosynthesis; L-histidine from 5-phospho-alpha-D-ribose 1-diphosphate: step 2/9. The protein operates within amino-acid biosynthesis; L-histidine biosynthesis; L-histidine from 5-phospho-alpha-D-ribose 1-diphosphate: step 3/9. In Vibrio vulnificus (strain YJ016), this protein is Histidine biosynthesis bifunctional protein HisIE.